We begin with the raw amino-acid sequence, 178 residues long: Large ribosomal subunit protein uL6 (178 aa).

It belongs to the universal ribosomal protein uL6 family. In terms of assembly, part of the 50S ribosomal subunit.

In terms of biological role, this protein binds to the 23S rRNA, and is important in its secondary structure. It is located near the subunit interface in the base of the L7/L12 stalk, and near the tRNA binding site of the peptidyltransferase center. This Thermoplasma volcanium (strain ATCC 51530 / DSM 4299 / JCM 9571 / NBRC 15438 / GSS1) protein is Large ribosomal subunit protein uL6.